A 31-amino-acid polypeptide reads, in one-letter code: Cytochrome b6-f complex subunit 6 (31 aa).

The chain crosses the membrane as a helical span at residues 4–24; sequence VIAYLGLLASVLIGTIVIYLG.

It belongs to the PetL family. As to quaternary structure, the 4 large subunits of the cytochrome b6-f complex are cytochrome b6, subunit IV (17 kDa polypeptide, PetD), cytochrome f and the Rieske protein, while the 4 small subunits are PetG, PetL, PetM and PetN. The complex functions as a dimer.

Its subcellular location is the plastid. It localises to the chloroplast thylakoid membrane. In terms of biological role, component of the cytochrome b6-f complex, which mediates electron transfer between photosystem II (PSII) and photosystem I (PSI), cyclic electron flow around PSI, and state transitions. PetL is important for photoautotrophic growth as well as for electron transfer efficiency and stability of the cytochrome b6-f complex. This Oltmannsiellopsis viridis (Marine flagellate) protein is Cytochrome b6-f complex subunit 6.